Consider the following 571-residue polypeptide: Zinc finger protein 181 (571 aa).

The region spanning 4–76 (VTFNDVAIDF…EKKLSKGMIP (73 aa)) is the KRAB domain. Residues Lys-109 and Lys-126 each participate in a glycyl lysine isopeptide (Lys-Gly) (interchain with G-Cter in SUMO2) cross-link. C2H2-type zinc fingers lie at residues 237-259 (YTCS…WRIH), 265-287 (YECR…LISH), 293-315 (YKCI…QSTH), 321-343 (YECM…LRIH), 349-371 (YECR…QKIH), 377-399 (YECR…QRIH), 405-427 (YECN…QSIH), 433-455 (FECQ…LRNH), 461-483 (YECS…HRIH), 489-511 (YECI…QRIH), and 517-539 (YKCN…QRVH).

Belongs to the krueppel C2H2-type zinc-finger protein family.

It localises to the nucleus. Functionally, may be involved in transcriptional regulation. The protein is Zinc finger protein 181 (ZNF181) of Homo sapiens (Human).